A 121-amino-acid chain; its full sequence is Large ribosomal subunit protein uL14 (121 aa).

The protein belongs to the universal ribosomal protein uL14 family. As to quaternary structure, part of the 50S ribosomal subunit. Forms a cluster with proteins L3 and L19. In the 70S ribosome, L14 and L19 interact and together make contacts with the 16S rRNA in bridges B5 and B8.

Binds to 23S rRNA. Forms part of two intersubunit bridges in the 70S ribosome. The sequence is that of Large ribosomal subunit protein uL14 from Synechococcus elongatus (strain ATCC 33912 / PCC 7942 / FACHB-805) (Anacystis nidulans R2).